We begin with the raw amino-acid sequence, 498 residues long: Glycerol kinase (498 aa).

T14 contributes to the ADP binding site. Residues T14, T15, and S16 each coordinate ATP. T14 contacts sn-glycerol 3-phosphate. Residue R18 coordinates ADP. R84, E85, Y136, and D245 together coordinate sn-glycerol 3-phosphate. 5 residues coordinate glycerol: R84, E85, Y136, D245, and Q246. T267 and G310 together coordinate ADP. T267, G310, Q314, and G410 together coordinate ATP. Positions 410 and 414 each coordinate ADP.

It belongs to the FGGY kinase family.

It carries out the reaction glycerol + ATP = sn-glycerol 3-phosphate + ADP + H(+). It functions in the pathway polyol metabolism; glycerol degradation via glycerol kinase pathway; sn-glycerol 3-phosphate from glycerol: step 1/1. With respect to regulation, inhibited by fructose 1,6-bisphosphate (FBP). Its function is as follows. Key enzyme in the regulation of glycerol uptake and metabolism. Catalyzes the phosphorylation of glycerol to yield sn-glycerol 3-phosphate. The polypeptide is Glycerol kinase (Rhodospirillum centenum (strain ATCC 51521 / SW)).